Reading from the N-terminus, the 291-residue chain is Ribosomal RNA small subunit methyltransferase A (291 aa).

Residues H21, L23, G48, E70, D95, and N115 each contribute to the S-adenosyl-L-methionine site.

The protein belongs to the class I-like SAM-binding methyltransferase superfamily. rRNA adenine N(6)-methyltransferase family. RsmA subfamily.

It is found in the cytoplasm. It catalyses the reaction adenosine(1518)/adenosine(1519) in 16S rRNA + 4 S-adenosyl-L-methionine = N(6)-dimethyladenosine(1518)/N(6)-dimethyladenosine(1519) in 16S rRNA + 4 S-adenosyl-L-homocysteine + 4 H(+). Its function is as follows. Specifically dimethylates two adjacent adenosines (A1518 and A1519) in the loop of a conserved hairpin near the 3'-end of 16S rRNA in the 30S particle. May play a critical role in biogenesis of 30S subunits. In Prochlorococcus marinus (strain NATL1A), this protein is Ribosomal RNA small subunit methyltransferase A.